A 1048-amino-acid chain; its full sequence is Malignant fibrous histiocytoma-amplified sequence 1 homolog (1048 aa).

Ala2 bears the N-acetylalanine mark. 13 LRR repeats span residues 60 to 81 (DIEV…LGSA), 84 to 105 (SLRV…VAEL), 108 to 129 (HLTE…VVSA), 132 to 153 (ELRK…LGAL), 155 to 176 (HLEE…FSCL), 178 to 199 (HLRT…LLQL), 201 to 222 (ALEE…ISAL), 224 to 246 (ALKI…CELA), 247 to 268 (SLES…FSRL), 270 to 292 (RLKM…LPLA), 293 to 314 (GLEE…IAGL), 316 to 337 (RLLT…IVEL), and 339 to 360 (GLEE…FGQL). Residues 60-360 (DIEVLNLGNN…AVLPDNFGQL (301 aa)) form a required for interaction with PJA2 region. The segment at 60–645 (DIEVLNLGNN…DKLLSVAEHR (586 aa)) is required for interaction with PPP2R2A. Residues 399 to 645 (QPAVQPRLKL…DKLLSVAEHR (247 aa)) form the Roc domain. Lys597 carries the post-translational modification N6-acetyllysine.

In terms of assembly, interacts with RAF1. Interacts with HSPD1. Interacts with PPP2CA; retains PPP2CA into the cytoplasm and excludes it from the nucleus. Interacts with PPP2R2A; the interaction is direct. Interacts with PJA2. In terms of processing, ubiquitinated. Ubiquitination by PJA2 does not lead MFHAS1 to proteasomal degradation but positively regulates its function in polarization of macrophages.

Its subcellular location is the cytoplasm. Its function is as follows. Probable GTP-binding protein. Functions in innate immunity and more specifically the inflammatory response as a regulator of the Toll-like receptor TLR2 and TLR4 signaling pathways. Negatively regulates the part of the TLR4 signaling pathway that leads to the activation of the transcription factor AP-1. By retaining the phosphatase complex PP2A into the cytoplasm, prevents the dephosphorylation of the AP-1 subunit JUN which is required for proper activation of the transcription factor. Both inhibits and activates the TLR2-dependent signaling pathway. Positively regulates the TLR2 signaling pathway to activate specifically the downstream p38 and JNK MAP kinases and promote the polarization of macrophages toward the pro-inflammatory M1 phenotype. It may also play a role in the regulation of inflammation induced by high glucose through the PKB/AKT signaling pathway. Also involved in erythrocyte differentiation through activation of the ERK1/ERK2 signaling pathway. The protein is Malignant fibrous histiocytoma-amplified sequence 1 homolog of Mus musculus (Mouse).